Here is a 432-residue protein sequence, read N- to C-terminus: PC-esterase domain-containing protein 1B (432 aa).

Disordered regions lie at residues 264–293 (EWIK…LSPP) and 398–432 (RGFG…PRPQ).

Belongs to the PC-esterase family.

The polypeptide is PC-esterase domain-containing protein 1B (Homo sapiens (Human)).